The following is a 236-amino-acid chain: tRNA (guanine-N(1)-)-methyltransferase (236 aa).

S-adenosyl-L-methionine-binding positions include glycine 113 and 133–138; that span reads IGDYVL.

It belongs to the RNA methyltransferase TrmD family. Homodimer.

It localises to the cytoplasm. It catalyses the reaction guanosine(37) in tRNA + S-adenosyl-L-methionine = N(1)-methylguanosine(37) in tRNA + S-adenosyl-L-homocysteine + H(+). Specifically methylates guanosine-37 in various tRNAs. This chain is tRNA (guanine-N(1)-)-methyltransferase, found in Lachnospira eligens (strain ATCC 27750 / DSM 3376 / VPI C15-48 / C15-B4) (Eubacterium eligens).